We begin with the raw amino-acid sequence, 485 residues long: ETS translocation variant 4 (485 aa).

Residue K6 forms a Glycyl lysine isopeptide (Lys-Gly) (interchain with G-Cter in SUMO2) linkage. Disordered regions lie at residues 79-114 (PDFH…RKPP) and 135-214 (IAIK…QHQL). K95 is covalently cross-linked (Glycyl lysine isopeptide (Lys-Gly) (interchain with G-Cter in SUMO)). At S100 the chain carries Phosphoserine. Residue K138 forms a Glycyl lysine isopeptide (Lys-Gly) (interchain with G-Cter in SUMO2) linkage. Phosphoserine occurs at positions 139 and 148. Low complexity predominate over residues 158–171 (QQQSLLRASSSSQS). A Phosphoserine modification is found at S215. Glycyl lysine isopeptide (Lys-Gly) (interchain with G-Cter in SUMO) cross-links involve residues K227 and K261. A Glycyl lysine isopeptide (Lys-Gly) (interchain with G-Cter in SUMO2) cross-link involves residue K323. Residues 342 to 422 (LQLWQFLVAL…AGERYVYKFV (81 aa)) constitute a DNA-binding region (ETS).

This sequence belongs to the ETS family. Post-translationally, sumoylated; enhanced upon ERK/MAP kinase pathway activation it positively regulates the transcriptional activator capacity. Sumoylation at Lys-95 probably requires phosphorylation at Ser-100. Transiently polysumoylated and desumoylated by SENP1. Sumoylation is a prerequisite to polyubiquitination which in turn increases proteasomal-mediated degradation. Probably polyubiquitinated by RNF4 and deubiquitinated by USP2. Epididymis and brain.

The protein localises to the nucleus. Its function is as follows. Transcriptional activator. May play a role in keratinocyte differentiation. This Mus musculus (Mouse) protein is ETS translocation variant 4 (Etv4).